Reading from the N-terminus, the 390-residue chain is Isotocin receptor (390 aa).

Residues 1 to 48 (MEEMFKEQDFWSFNESSRNSTVGNETFGGNQTVNPLKRNEEVAKVEVT) are Extracellular-facing. N-linked (GlcNAc...) asparagine glycans are attached at residues Asn-14, Asn-19, Asn-24, and Asn-30. The chain crosses the membrane as a helical span at residues 49–69 (VLALVLFLALAGNLCVLIAIY). At 70–86 (TAKHTQSRMYYLMKHLS) the chain is on the cytoplasmic side. A helical transmembrane segment spans residues 87–107 (IADLVVAVFQVLPQLIWDITF). At 108 to 124 (RFYGPDFLCRLVKYLQT) the chain is on the extracellular side. Cysteines 116 and 191 form a disulfide. Residues 125-145 (VGMFASTYMLVLMSIDRCIAI) traverse the membrane as a helical segment. Residues 146–160 (CQPLRSLHKRKDRCY) lie on the Cytoplasmic side of the membrane. Residues 161-181 (VIVSWALSLVFSVPQVYIFSL) traverse the membrane as a helical segment. The Extracellular segment spans residues 182–206 (REIGNGVYDCWGDFVQPWGAKAYIT). A helical transmembrane segment spans residues 207–227 (WISLTIYIIPVAILGGCYGLI). At 228–276 (SFKIWQNFKRKTKKDQCITLTTAASKANALARVSSVKLVSKAKITTVKM) the chain is on the cytoplasmic side. The chain crosses the membrane as a helical span at residues 277–297 (TFVIVLAYIVCWTPFFFVQMW). Residues 298 to 311 (SAWDPEAPREAMPF) lie on the Extracellular side of the membrane. A helical membrane pass occupies residues 312-332 (IISMLLASLNSCCNPWIYMFF). At 333–390 (AGHLFHDLKQSLLCCSTLYLKSSQCRCDQEHDSRKSNCSTYVIKSTSSQRSITQSSIT) the chain is on the cytoplasmic side.

The protein belongs to the G-protein coupled receptor 1 family. Vasopressin/oxytocin receptor subfamily. In terms of tissue distribution, expressed in brain, intestine, bladder, skeletal muscle, lateral line, gills and kidney.

It is found in the cell membrane. Functionally, binds to isotocin. Can also be activated by vasotocin, mesotocin, oxytocin and Arg-vasopressin, although these have lower potencies than isotocin. Produces an induction of membrane chloride currents indicating that it is coupled to the inositol phosphate/calcium pathway. This is Isotocin receptor from Catostomus commersonii (White sucker).